The following is a 490-amino-acid chain: Cytochrome P450 2C20 (490 aa).

Cys-435 contributes to the heme binding site.

The protein belongs to the cytochrome P450 family. Heme serves as cofactor.

It localises to the endoplasmic reticulum membrane. It is found in the microsome membrane. The catalysed reaction is an organic molecule + reduced [NADPH--hemoprotein reductase] + O2 = an alcohol + oxidized [NADPH--hemoprotein reductase] + H2O + H(+). Functionally, cytochromes P450 are a group of heme-thiolate monooxygenases. In liver microsomes, this enzyme is involved in an NADPH-dependent electron transport pathway. It oxidizes a variety of structurally unrelated compounds, including steroids, fatty acids, and xenobiotics. The sequence is that of Cytochrome P450 2C20 (CYP2C20) from Macaca fascicularis (Crab-eating macaque).